We begin with the raw amino-acid sequence, 188 residues long: Elongation factor P-like protein (188 aa).

This sequence belongs to the elongation factor P family.

This is Elongation factor P-like protein from Stenotrophomonas maltophilia (strain K279a).